A 122-amino-acid chain; its full sequence is Protein YqjC (122 aa).

The first 20 residues, Met1–Ala20, serve as a signal peptide directing secretion. The interval Gln65–Ile100 is disordered. A compositionally biased stretch (basic and acidic residues) spans Leu66–Ile100.

This chain is Protein YqjC (yqjC), found in Escherichia coli (strain K12).